The primary structure comprises 344 residues: uncharacterized protein (344 aa).

Helical transmembrane passes span 155–175 (IARI…IFLV), 181–201 (WGLG…AYGW), 221–241 (LSFI…VNGF), 254–274 (ISSF…FALL), 291–311 (FTII…AAYV), and 319–339 (ALQN…IGVF).

The protein to M.jannaschii MJ1032.

The protein resides in the cell membrane. This is an uncharacterized protein from Archaeoglobus fulgidus (strain ATCC 49558 / DSM 4304 / JCM 9628 / NBRC 100126 / VC-16).